The primary structure comprises 129 residues: Small ribosomal subunit protein uS8 (129 aa).

This sequence belongs to the universal ribosomal protein uS8 family. In terms of assembly, part of the 30S ribosomal subunit. Contacts proteins S5 and S12.

Its function is as follows. One of the primary rRNA binding proteins, it binds directly to 16S rRNA central domain where it helps coordinate assembly of the platform of the 30S subunit. This chain is Small ribosomal subunit protein uS8, found in Mycoplasma capricolum subsp. capricolum (strain California kid / ATCC 27343 / NCTC 10154).